Here is a 53-residue protein sequence, read N- to C-terminus: Tryptophan RNA-binding attenuator protein inhibitory protein (53 aa).

CXXCXGXG motif repeat units lie at residues 12–19 (CPKCERAG) and 26–33 (CPACSGKG).

As to quaternary structure, homopentamer or homohexamer.

The protein resides in the cytoplasm. Functionally, by forming a complex with tryptophan-activated TRAP, and masking its RNA binding site, it inhibits TRAP's RNA binding ability, thereby abolishing TRAP regulation of gene expression, leading to antitermination and increased trp operon expression. AT acts by competing with messenger RNA for the RNA binding domain of TRAP. In Bacillus subtilis (strain 168), this protein is Tryptophan RNA-binding attenuator protein inhibitory protein (rtpA).